Here is a 2718-residue protein sequence, read N- to C-terminus: E3 SUMO-protein ligase RanBP2 (2718 aa).

The segment at 1 to 100 (MFTTRKEVDA…DPRQSEVVID (100 aa)) is sufficient for interaction with Hsp83. Positions 1-200 (MFTTRKEVDA…EKMKIDQAFN (200 aa)) are sufficient for interaction with piwi. TPR repeat units lie at residues 26–58 (DIKG…VRDD) and 59–94 (AVGH…DPRQ). Disordered stretches follow at residues 796 to 816 (QQDR…VHNN) and 937 to 959 (EHQQ…HPVV). The span at 803–816 (GIDNSFGSPDVHNN) shows a compositional bias: polar residues. Copy 1 of the repeat occupies 808–809 (FG). The 27 X 2 AA repeats of F-G stretch occupies residues 808-2581 (FGSPDVHNNS…GEENETKLFG (1774 aa)). The span at 938-948 (HQQQQQHQQQQ) shows a compositional bias: low complexity. 3 tandem repeats follow at residues 1028–1029 (FG), 1035–1036 (FG), and 1104–1105 (FG). A disordered region spans residues 1181 to 1208 (QPVEKEPPANVVITSSDPLPKPTTASVQ). The segment covering 1192 to 1208 (VITSSDPLPKPTTASVQ) has biased composition (polar residues). Copy 5 of the repeat occupies 1252-1253 (FG). 2 disordered regions span residues 1263 to 1314 (FKTQ…KPII) and 1483 to 1502 (NKPQ…ATAA). Positions 1284–1299 (NQSGATDPNKTLPQDT) are enriched in polar residues. Residues 1309–1445 (DFKPIIPLPD…FTKASEAAKS (137 aa)) enclose the RanBD1 1 domain. Residues 1483-1493 (NKPQEQTKTQP) are compositionally biased toward polar residues. 4 consecutive repeat copies span residues 1506–1507 (FG), 1539–1540 (FG), 1547–1548 (FG), and 1552–1553 (FG). A RanBD1 2 domain is found at 1605–1742 (QFVPVIALPD…VQKAQQSIGN (138 aa)). Positions 1738–1761 (QSIGNEPKKEEVPSAAGEKEKPIK) are disordered. The span at 1743–1760 (EPKKEEVPSAAGEKEKPI) shows a compositional bias: basic and acidic residues. The stretch at 1763-1764 (FG) is repeat 10. A RanBP2-type 1 zinc finger spans residues 1770–1799 (KAGSWNCQACYTNNGQDQLYCLACQEPKDA). 4 repeat units span residues 1826-1827 (FG), 1842-1843 (FG), 1874-1875 (FG), and 1883-1884 (FG). Residues 1890–1919 (AVGSWSCSACYVNNPGESLYCSACDAPKND) form a RanBP2-type 2 zinc finger. Tandem repeats lie at residues 1942-1943 (FG) and 1944-1945 (FG). 3 disordered regions span residues 1981 to 2021 (FTFS…TYFS), 2154 to 2204 (EDSP…THEV), and 2239 to 2273 (SLSR…KDAG). The segment covering 2002–2016 (EDEDNDSQEVEEEEN) has biased composition (acidic residues). The region spanning 2019–2151 (YFSPVIPLPD…IKNALNETAK (133 aa)) is the RanBD1 3 domain. A compositionally biased stretch (polar residues) spans 2161–2175 (SVSQSTEANKPSQKN). The span at 2239 to 2257 (SLSRNNSSASEASKTPSSA) shows a compositional bias: low complexity. 11 tandem repeats follow at residues 2260-2261 (FG), 2313-2314 (FG), 2332-2333 (FG), 2352-2353 (FG), 2360-2361 (FG), 2366-2367 (FG), 2393-2394 (FG), 2399-2400 (FG), 2415-2416 (FG), 2421-2422 (FG), and 2580-2581 (FG). A disordered region spans residues 2320 to 2346 (AEQQKKDSSESVFGGNKADSQSPATQE). Positions 2556–2699 (HYDAIVELPD…VNSCIKRAKA (144 aa)) constitute a RanBD1 4 domain.

Belongs to the RanBP2 E3 ligase family. Part of the nuclear pore complex. Forms a complex with Nxt1, sbr/Nxf1 and RanGAP. Interacts (via TPR repeats) with Hsp83; the interaction is required for the nuclear import of the sesquiterpenoid juvenile hormone receptor Met. Interacts (via N-terminus) with piwi. As to expression, expressed in both oocytes and nurse cells (at protein level).

It is found in the nucleus. Its subcellular location is the nuclear pore complex. Functionally, E3 SUMO-protein ligase. Component of the nuclear pore complex (NPC), a complex required for trafficking across the nuclear envelope. Required for nuclear import of nuclear localization signal (NLS)-containing proteins in an importin alpha/importin beta-dependent manner, but also for the nuclear import of specific proteins such as phosphorylated Mad or the sesquiterpenoid juvenile hormone receptor Met as part of the juvenile hormone signal transduction pathway. Plays a role in nuclear mRNA export by recruiting the mRNA transport complex composed of Nxt1 and sbr/Nxf1 to the NPC. Essential during germline development for transposon silencing and piRNA biogenesis probably by regulating piwi localization to the nucleus. During oogenesis, required to form granules that modulate the biogenesis of annulate lamellae containing nuclear pore complex components. This Drosophila melanogaster (Fruit fly) protein is E3 SUMO-protein ligase RanBP2.